Reading from the N-terminus, the 359-residue chain is Norspermidine sensor (359 aa).

The N-terminal stretch at 1-33 (MTNFCNEWVSYSQMIKRFLSLMVLNTVCYQASA) is a signal peptide.

The protein belongs to the bacterial solute-binding protein PotD/PotF family.

The protein localises to the periplasm. In terms of biological role, acts as a sensor of norspermidine and enhances biofilm formation. When complexed to norspermidine, could interact with the periplasmic portion of MbaA to regulate its enzymatic activity. The chain is Norspermidine sensor (nspS) from Vibrio cholerae serotype O1 (strain ATCC 39315 / El Tor Inaba N16961).